The primary structure comprises 224 residues: F420-dependent NADP reductase (224 aa).

NADP(+) is bound by residues 9–12, 31–32, Lys36, Val74, Val100, and Ala145; these read TGDQ and SR.

The protein belongs to the F420-dependent NADP reductase family. As to quaternary structure, homotetramer.

The enzyme catalyses reduced coenzyme F420-(gamma-L-Glu)(n) + NADP(+) = oxidized coenzyme F420-(gamma-L-Glu)(n) + NADPH + 2 H(+). Catalyzes the reduction of NADP(+) with F420H(2) via hydride transfer, and the reverse reaction, i.e. the reduction of F420 with NADPH. Probably functions in the regeneration of NADPH required in biosynthetic reactions. The polypeptide is F420-dependent NADP reductase (Methanothermobacter marburgensis (strain ATCC BAA-927 / DSM 2133 / JCM 14651 / NBRC 100331 / OCM 82 / Marburg) (Methanobacterium thermoautotrophicum)).